Consider the following 79-residue polypeptide: Conotoxin Leo-O4 (79 aa).

Positions 1 to 22 (MKLTCMMLVAVLFLTAWTFVTA) are cleaved as a signal peptide. Residues 23–51 (NVSRNGLENLFPEERHEMMNPNAAKLNNR) constitute a propeptide that is removed on maturation. 3 cysteine pairs are disulfide-bonded: Cys53–Cys70, Cys60–Cys74, and Cys69–Cys78.

Belongs to the conotoxin O1 superfamily. In terms of tissue distribution, expressed by the venom duct.

Its subcellular location is the secreted. This Conus leopardus (Leopard cone) protein is Conotoxin Leo-O4.